Here is a 527-residue protein sequence, read N- to C-terminus: MVTMSSPTDSSPSNSFSDFNREEQSRLSDEVRQLKRTNSDLGARNAKLAEMLKSSRDKLSVLFSQLEDMAQPPSVYGTFLETAKDGSNAEIFAGGRRMRVAVSPMLCAADLMPGVQVRLGEGNQVLEACDFEQTGELATLMEMIGRDRALVSDRSGEERVVKLAGPLMDRTAKLPRPGDTLLVDRKAGYAFEAIAKTEISRLALEEAPDVSYQDIGGLDDQIELIQDAVELPFLHPEMYRAYNLHPPKGVLLYGPPGCGKTLIAKAVANSLANRIGETGTSYFINVKGPELLNKYVGETERQIRVIFERARELAGDGRPVIIFFDEMESIFRTRGSGVSSDMETTVVPQLLAELDGVEDLSNVIVVGATNREELIDPAILRPGRLDIKIRINRPNKQGAHDIFTRYINDSIPLAEPAEDLIDRAVDHLYTPRPYVRLTLIDGSVETLNYHDFVSGAMIANIVDRAKKSAIKAHIDGTGVGLTAEQLIQAIDDENQQSEDLPNTSNPDEWSRITGRQGKQVTHAEVVI.

Positions 1–18 are enriched in low complexity; it reads MVTMSSPTDSSPSNSFSD. A disordered region spans residues 1–38; that stretch reads MVTMSSPTDSSPSNSFSDFNREEQSRLSDEVRQLKRTN. Over residues 19 to 33 the composition is skewed to basic and acidic residues; that stretch reads FNREEQSRLSDEVRQ. Residues 21–53 are a coiled coil; sequence REEQSRLSDEVRQLKRTNSDLGARNAKLAEMLK. 257 to 262 provides a ligand contact to ATP; the sequence is GCGKTL. Residues 492 to 515 form a disordered region; that stretch reads DENQQSEDLPNTSNPDEWSRITGR. Residues 497–507 show a composition bias toward polar residues; sequence SEDLPNTSNPD.

Belongs to the AAA ATPase family. In terms of assembly, homohexamer. Assembles into a hexameric ring structure.

The polypeptide is AAA ATPase forming ring-shaped complexes (Corynebacterium glutamicum (strain R)).